A 349-amino-acid polypeptide reads, in one-letter code: Outer membrane protein assembly factor BamC (349 aa).

The signal sequence occupies residues 1–24; that stretch reads MAILLQKSKVMKIAGMSLAMLLAA. A lipid anchor (N-palmitoyl cysteine) is attached at Cys25. Cys25 carries the S-diacylglycerol cysteine lipid modification.

The protein belongs to the BamC family. In terms of assembly, part of the Bam complex, which is composed of the outer membrane protein BamA, and four lipoproteins BamB, BamC, BamD and BamE.

It is found in the cell outer membrane. Part of the outer membrane protein assembly complex, which is involved in assembly and insertion of beta-barrel proteins into the outer membrane. The protein is Outer membrane protein assembly factor BamC of Photorhabdus asymbiotica subsp. asymbiotica (strain ATCC 43949 / 3105-77) (Xenorhabdus luminescens (strain 2)).